A 137-amino-acid chain; its full sequence is NADH-ubiquinone oxidoreductase chain 3 (137 aa).

Transmembrane regions (helical) follow at residues 6–26 (LFIL…LIFA), 57–77 (FFIF…TFPF), and 86–106 (IYGL…FVYE).

Belongs to the complex I subunit 3 family.

It localises to the mitochondrion membrane. The catalysed reaction is a ubiquinone + NADH + 5 H(+)(in) = a ubiquinol + NAD(+) + 4 H(+)(out). Its function is as follows. Core subunit of the mitochondrial membrane respiratory chain NADH dehydrogenase (Complex I) that is believed to belong to the minimal assembly required for catalysis. Complex I functions in the transfer of electrons from NADH to the respiratory chain. The immediate electron acceptor for the enzyme is believed to be ubiquinone. The polypeptide is NADH-ubiquinone oxidoreductase chain 3 (ND3) (Podospora anserina (strain S / ATCC MYA-4624 / DSM 980 / FGSC 10383) (Pleurage anserina)).